Here is a 68-residue protein sequence, read N- to C-terminus: Conotoxin Mi11.1 (68 aa).

The N-terminal stretch at 1–26 (MMLRLTSVSCFLLVIACLNLFQVVLT) is a signal peptide. 4 cysteine pairs are disulfide-bonded: C29-C43, C36-C48, C42-C52, and C47-C56. Y60 is subject to Tyrosine amide. Residues 64–68 (ATFQE) constitute a propeptide that is removed on maturation.

This sequence belongs to the conotoxin I2 superfamily. Expressed by the venom duct.

It is found in the secreted. In Conus miles (Soldier cone), this protein is Conotoxin Mi11.1.